Consider the following 336-residue polypeptide: Tetraacyldisaccharide 4'-kinase (336 aa).

58 to 65 (AVGGSGKT) is a binding site for ATP.

This sequence belongs to the LpxK family.

The enzyme catalyses a lipid A disaccharide + ATP = a lipid IVA + ADP + H(+). Its pathway is glycolipid biosynthesis; lipid IV(A) biosynthesis; lipid IV(A) from (3R)-3-hydroxytetradecanoyl-[acyl-carrier-protein] and UDP-N-acetyl-alpha-D-glucosamine: step 6/6. Functionally, transfers the gamma-phosphate of ATP to the 4'-position of a tetraacyldisaccharide 1-phosphate intermediate (termed DS-1-P) to form tetraacyldisaccharide 1,4'-bis-phosphate (lipid IVA). This is Tetraacyldisaccharide 4'-kinase from Aromatoleum aromaticum (strain DSM 19018 / LMG 30748 / EbN1) (Azoarcus sp. (strain EbN1)).